Here is a 209-residue protein sequence, read N- to C-terminus: Putative AgrB-like protein (209 aa).

Transmembrane regions (helical) follow at residues 49-71 (ILFL…AAFG), 82-102 (AKNS…GAYL), 105-125 (YLLF…LLLF), 149-169 (QAVL…DELI), and 173-193 (ISLS…KVLG).

Belongs to the AgrB family.

It localises to the cell membrane. May be involved in the proteolytic processing of a quorum sensing system signal molecule precursor. This chain is Putative AgrB-like protein, found in Clostridium acetobutylicum (strain ATCC 824 / DSM 792 / JCM 1419 / IAM 19013 / LMG 5710 / NBRC 13948 / NRRL B-527 / VKM B-1787 / 2291 / W).